The primary structure comprises 142 residues: Thioredoxin-like protein YLS8 (142 aa).

Belongs to the DIM1 family. As to expression, expressed in roots, leaves, stems, cauline leaves and flowers.

In Arabidopsis thaliana (Mouse-ear cress), this protein is Thioredoxin-like protein YLS8 (YLS8).